The primary structure comprises 248 residues: uncharacterized protein (248 aa).

The first 26 residues, 1 to 26 (MVAPRISPKIVLVGFALFAIISASLA), serve as a signal peptide directing secretion.

This is an uncharacterized protein from Acanthamoeba polyphaga mimivirus (APMV).